Reading from the N-terminus, the 459-residue chain is Exodeoxyribonuclease 7 large subunit (459 aa).

It belongs to the XseA family. As to quaternary structure, heterooligomer composed of large and small subunits.

Its subcellular location is the cytoplasm. The catalysed reaction is Exonucleolytic cleavage in either 5'- to 3'- or 3'- to 5'-direction to yield nucleoside 5'-phosphates.. Functionally, bidirectionally degrades single-stranded DNA into large acid-insoluble oligonucleotides, which are then degraded further into small acid-soluble oligonucleotides. The protein is Exodeoxyribonuclease 7 large subunit of Yersinia pseudotuberculosis serotype IB (strain PB1/+).